Consider the following 410-residue polypeptide: Arginine deiminase (410 aa).

The Amidino-cysteine intermediate role is filled by C400.

It belongs to the arginine deiminase family.

It is found in the cytoplasm. It carries out the reaction L-arginine + H2O = L-citrulline + NH4(+). The protein operates within amino-acid degradation; L-arginine degradation via ADI pathway; carbamoyl phosphate from L-arginine: step 1/2. The polypeptide is Arginine deiminase (Streptococcus uberis (strain ATCC BAA-854 / 0140J)).